The sequence spans 125 residues: UPF0102 protein PA4424 (125 aa).

Belongs to the UPF0102 family.

This is UPF0102 protein PA4424 from Pseudomonas aeruginosa (strain ATCC 15692 / DSM 22644 / CIP 104116 / JCM 14847 / LMG 12228 / 1C / PRS 101 / PAO1).